The primary structure comprises 869 residues: Phenylalanine--tRNA ligase beta subunit (869 aa).

A tRNA-binding domain is found at 41–162 (SQVTGPIVVG…QYGFSEAEYE (122 aa)). The B5 domain maps to 443 to 519 (PRAKAIHFKA…RLVGYDQIPI (77 aa)). Mg(2+) is bound by residues Asp497, Asp503, Glu506, and Glu507. The FDX-ACB domain occupies 776–868 (STFPPVKQDL…EAAEIGAQLR (93 aa)).

It belongs to the phenylalanyl-tRNA synthetase beta subunit family. Type 1 subfamily. As to quaternary structure, tetramer of two alpha and two beta subunits. Requires Mg(2+) as cofactor.

It is found in the cytoplasm. The enzyme catalyses tRNA(Phe) + L-phenylalanine + ATP = L-phenylalanyl-tRNA(Phe) + AMP + diphosphate + H(+). This is Phenylalanine--tRNA ligase beta subunit from Bifidobacterium longum (strain NCC 2705).